Here is an 84-residue protein sequence, read N- to C-terminus: Small ribosomal subunit protein eS27 (84 aa).

The span at 1 to 16 (MPLAKDLLHPTPEEEK) shows a compositional bias: basic and acidic residues. The disordered stretch occupies residues 1–23 (MPLAKDLLHPTPEEEKRKHKKKR). A C4-type zinc finger spans residues 37–59 (CPGCYKITTVFSHAQTVVLCVGC).

It belongs to the eukaryotic ribosomal protein eS27 family. Component of the small ribosomal subunit. Part of the small subunit (SSU) processome, composed of more than 70 proteins and the RNA chaperone small nucleolar RNA (snoRNA) U3. Requires Zn(2+) as cofactor.

It localises to the cytoplasm. The protein localises to the nucleus. Its subcellular location is the nucleolus. In terms of biological role, component of the small ribosomal subunit. The ribosome is a large ribonucleoprotein complex responsible for the synthesis of proteins in the cell. Required for proper rRNA processing and maturation of 18S rRNAs. Part of the small subunit (SSU) processome, first precursor of the small eukaryotic ribosomal subunit. During the assembly of the SSU processome in the nucleolus, many ribosome biogenesis factors, an RNA chaperone and ribosomal proteins associate with the nascent pre-rRNA and work in concert to generate RNA folding, modifications, rearrangements and cleavage as well as targeted degradation of pre-ribosomal RNA by the RNA exosome. The protein is Small ribosomal subunit protein eS27 (rps27) of Xenopus laevis (African clawed frog).